Consider the following 1375-residue polypeptide: DNA-directed RNA polymerase subunit beta' (1375 aa).

C70, C72, C85, and C88 together coordinate Zn(2+). D460, D462, and D464 together coordinate Mg(2+). Zn(2+)-binding residues include C800, C874, C881, and C884.

Belongs to the RNA polymerase beta' chain family. In terms of assembly, the RNAP catalytic core consists of 2 alpha, 1 beta, 1 beta' and 1 omega subunit. When a sigma factor is associated with the core the holoenzyme is formed, which can initiate transcription. Mg(2+) is required as a cofactor. The cofactor is Zn(2+).

It carries out the reaction RNA(n) + a ribonucleoside 5'-triphosphate = RNA(n+1) + diphosphate. DNA-dependent RNA polymerase catalyzes the transcription of DNA into RNA using the four ribonucleoside triphosphates as substrates. This is DNA-directed RNA polymerase subunit beta' from Bdellovibrio bacteriovorus (strain ATCC 15356 / DSM 50701 / NCIMB 9529 / HD100).